The chain runs to 241 residues: Nickel import ATP-binding protein LarO (241 aa).

In terms of domain architecture, ABC transporter spans 2–240 (IKLVNICYDY…QPARQAQLMT (239 aa)). 34–41 (GPNGSGKS) lines the ATP pocket.

This sequence belongs to the ABC transporter superfamily. As to quaternary structure, may form an energy-coupling factor (ECF) transporter complex composed of an ATP-binding protein (A component, LarO), a transmembrane protein (T component, LarQ) and a fused possible substrate-capture protein (S component, LarMN) of unknown stoichiometry.

The protein resides in the cell membrane. Probable ATP-binding component of the energy-coupling factor (ECF) transporter complex LarMNQO involved in nickel import. LarO is presumably responsible for energy coupling to the transport system. The polypeptide is Nickel import ATP-binding protein LarO (Lactiplantibacillus plantarum (strain ATCC BAA-793 / NCIMB 8826 / WCFS1) (Lactobacillus plantarum)).